We begin with the raw amino-acid sequence, 446 residues long: Alpha-galacturonidase (446 aa).

10-72 provides a ligand contact to NAD(+); the sequence is IKIAYIGGGS…GRWRYEAVST (63 aa). Substrate is bound at residue Asn151. A Mn(2+)-binding site is contributed by Cys173. The active-site Proton donor is His174. Residue His210 participates in Mn(2+) binding.

The protein belongs to the glycosyl hydrolase 4 family. As to quaternary structure, homotetramer. It depends on NAD(+) as a cofactor. Mn(2+) serves as cofactor.

It carries out the reaction [(1-&gt;4)-alpha-D-galacturonosyl](n) + H2O = alpha-D-galacturonate + [(1-&gt;4)-alpha-D-galacturonosyl](n-1). Its function is as follows. Alpha-galacturonidase able to catalyze the hydrolysis of the chromogenic substrate p-nitrophenyl-alpha-D-galacturonic acid (pNPalphaGalUA), and of the probable natural substrate alpha-1,4-di-galacturonate (GalUA(2)). Can neither hydrolyze pNPbetaGalUA, nor the stereoisomeric pNPalphaGlcUA. Does not display alpha- or beta-glucosidase activity as it fails to hydrolyze melibiose, raffinose, lactose and the chromogenic analogs, pNPalphaGal and pNPbetaGal. Cannot use the following compounds as substrates: pNP-N-acetyl-alpha- and beta-D-galactosaminide, pNP-N-acetyl-alpha- and beta-D-glucosaminide, pNP-alpha-L- and beta-L-arabinopyranoside, pNP-alpha- and beta-D-glucuronide, pNP-alpha- and beta-D-glucopyranoside, pNP-alpha- and beta-D-glucopyranoside 6-phosphate, pNP-alpha-D-galactopyranoside 6-phosphate and oNP-beta-D-galactopyranoside 6-phosphate. This Bacillus subtilis (strain 168) protein is Alpha-galacturonidase (lplD).